A 138-amino-acid chain; its full sequence is ATP synthase epsilon chain (138 aa).

The protein belongs to the ATPase epsilon chain family. In terms of assembly, F-type ATPases have 2 components, CF(1) - the catalytic core - and CF(0) - the membrane proton channel. CF(1) has five subunits: alpha(3), beta(3), gamma(1), delta(1), epsilon(1). CF(0) has three main subunits: a, b and c.

It is found in the cell membrane. Its function is as follows. Produces ATP from ADP in the presence of a proton gradient across the membrane. In Caldanaerobacter subterraneus subsp. tengcongensis (strain DSM 15242 / JCM 11007 / NBRC 100824 / MB4) (Thermoanaerobacter tengcongensis), this protein is ATP synthase epsilon chain.